The following is a 775-amino-acid chain: Kazrin (775 aa).

A disordered region spans residues 38–66 (AELSGGGGPGPGPGAAASASAAGDSAATN). Positions 51 to 64 (GAAASASAAGDSAA) are enriched in low complexity. Positions 74–256 (AQVLLREEVS…LATLTKDVPK (183 aa)) form a coiled coil. Residues 174 to 333 (RDFIRNYEQH…SAAEGDRSST (160 aa)) are interaction with PPL. The tract at residues 290-427 (QQTLYHSHPP…QSLSLSEGEE (138 aa)) is disordered. Ser-352, Ser-367, and Ser-387 each carry phosphoserine. Residues 411 to 422 (SQCSPTRQSLSL) are compositionally biased toward polar residues. SAM domains lie at 446–511 (WKAG…YRDA), 524–588 (DHHW…LYQV), and 612–679 (WTNQ…SAVF). Disordered stretches follow at residues 688–715 (REAERFGTPPGRASSVTRAGKEENSSGL) and 729–762 (RGFSSKDPDFHDDYGSLQNEDCGDDDPQSRLEQC). Over residues 732-742 (SSKDPDFHDDY) the composition is skewed to basic and acidic residues.

This sequence belongs to the kazrin family. Isoform 2, isoform 3 and isoform 4 interact with PPL N-terminus. In terms of tissue distribution, isoform 2, isoform 3 and isoform 4 are expressed in several cell lines including keratinocytes and bladder and epidermoid carcinoma (at protein level). Isoform 2, isoform 3 and isoform 4 are expressed in hair follicle and interfollicular epidermis (at protein level).

The protein resides in the cytoplasm. It localises to the cytoskeleton. It is found in the cell junction. Its subcellular location is the desmosome. The protein localises to the nucleus. Its function is as follows. Component of the cornified envelope of keratinocytes. May be involved in the interplay between adherens junctions and desmosomes. The function in the nucleus is not known. The polypeptide is Kazrin (Homo sapiens (Human)).